We begin with the raw amino-acid sequence, 458 residues long: Argininosuccinate lyase (458 aa).

It belongs to the lyase 1 family. Argininosuccinate lyase subfamily.

The protein resides in the cytoplasm. It carries out the reaction 2-(N(omega)-L-arginino)succinate = fumarate + L-arginine. It participates in amino-acid biosynthesis; L-arginine biosynthesis; L-arginine from L-ornithine and carbamoyl phosphate: step 3/3. This is Argininosuccinate lyase from Pelobacter propionicus (strain DSM 2379 / NBRC 103807 / OttBd1).